The chain runs to 962 residues: Alpha-glucan phosphorylase 1 (962 aa).

A chloroplast-targeting transit peptide spans 1–63 (MDTMRISGVS…RSFLSVKSIS (63 aa)). Residues 525 to 552 (AKDAQNGVKTEQEEEKTAGEEEEDEVIP) form a disordered region. N6-(pyridoxal phosphate)lysine is present on Lys-808.

The protein belongs to the glycogen phosphorylase family. Pyridoxal 5'-phosphate is required as a cofactor.

Its subcellular location is the plastid. The protein resides in the chloroplast stroma. It catalyses the reaction [(1-&gt;4)-alpha-D-glucosyl](n) + phosphate = [(1-&gt;4)-alpha-D-glucosyl](n-1) + alpha-D-glucose 1-phosphate. Phosphorylase is an important allosteric enzyme in carbohydrate metabolism. Enzymes from different sources differ in their regulatory mechanisms and in their natural substrates. However, all known phosphorylases share catalytic and structural properties. May be not required for the degradation of starch, but the phosphorolysis of starch may play an important role in water stress tolerance. This Arabidopsis thaliana (Mouse-ear cress) protein is Alpha-glucan phosphorylase 1 (PHS1).